The sequence spans 480 residues: Endoplasmic reticulum lectin 1 (480 aa).

Residues 1-27 (MRRSDRFPCAGASLLVVLCGVFPSSFG) form the signal peptide. MRH domains follow at residues 108–245 (SSCS…LCNH) and 339–466 (SYCF…ICKI). Residues C110 and C123 are joined by a disulfide bond. The disordered stretch occupies residues 152-172 (VKKSPSEAGENQEDKERTEGH). Basic and acidic residues predominate over residues 163 to 172 (QEDKERTEGH). Intrachain disulfides connect C198–C231, C214–C243, C341–C354, C418–C452, and C433–C464.

It localises to the endoplasmic reticulum lumen. In terms of biological role, probable lectin that binds selectively to improperly folded lumenal proteins. May function in endoplasmic reticulum quality control and endoplasmic reticulum-associated degradation (ERAD) of both non-glycosylated proteins and glycoproteins. This chain is Endoplasmic reticulum lectin 1 (erlec1), found in Xenopus laevis (African clawed frog).